We begin with the raw amino-acid sequence, 312 residues long: Ribonuclease HIII (312 aa).

The RNase H type-2 domain maps to 95–311 (FNCIGSDEAG…REKAQKILKP (217 aa)). Aspartate 101, glutamate 102, and aspartate 206 together coordinate a divalent metal cation.

Belongs to the RNase HII family. RnhC subfamily. Requires Mn(2+) as cofactor. It depends on Mg(2+) as a cofactor.

It localises to the cytoplasm. It catalyses the reaction Endonucleolytic cleavage to 5'-phosphomonoester.. In terms of biological role, endonuclease that specifically degrades the RNA of RNA-DNA hybrids. The protein is Ribonuclease HIII of Staphylococcus aureus (strain MSSA476).